A 359-amino-acid polypeptide reads, in one-letter code: Stearoyl-CoA desaturase (359 aa).

Residues 1–72 (MPAHLLQEEI…EGPRPKLEYV (72 aa)) are Cytoplasmic-facing. A helical transmembrane segment spans residues 73–93 (WRNIILMSLLHLGALYGIILI). Asparagine 75 contributes to the substrate binding site. The Lumenal segment spans residues 94-97 (PTCK). Residues 98–118 (IYTLLWAFAYYLLSAVGVTAG) form a helical membrane-spanning segment. The Cytoplasmic portion of the chain corresponds to 119-217 (AHRLWSHRTY…EKLVMFQRRY (99 aa)). Residues histidine 120 and histidine 125 each contribute to the Fe cation site. Positions 120 to 125 (HRLWSH) match the Histidine box-1 motif. Positions 148, 155, and 156 each coordinate substrate. The Fe cation site is built by histidine 157, histidine 160, and histidine 161. Residues 157 to 161 (HRAHH) carry the Histidine box-2 motif. The substrate site is built by arginine 188 and lysine 189. Serine 203 carries the phosphoserine modification. The helical transmembrane segment at 218-237 (YKPGILLMCFILPTIVPWYC) threads the bilayer. At 238–241 (WGEA) the chain is on the lumenal side. Residues 242–263 (FPQSLFVATFLRYAIVLNATWL) form a helical membrane-spanning segment. Tryptophan 262 is a substrate binding site. The Cytoplasmic segment spans residues 264–359 (VNSAAHLYGY…RTGDESYKSG (96 aa)). The Fe cation site is built by histidine 269, histidine 298, histidine 301, and histidine 302. The Histidine box-3 motif lies at 298-302 (HNYHH).

This sequence belongs to the fatty acid desaturase type 1 family. It depends on Fe(2+) as a cofactor.

Its subcellular location is the endoplasmic reticulum membrane. The enzyme catalyses octadecanoyl-CoA + 2 Fe(II)-[cytochrome b5] + O2 + 2 H(+) = (9Z)-octadecenoyl-CoA + 2 Fe(III)-[cytochrome b5] + 2 H2O. It carries out the reaction hexadecanoyl-CoA + 2 Fe(II)-[cytochrome b5] + O2 + 2 H(+) = (9Z)-hexadecenoyl-CoA + 2 Fe(III)-[cytochrome b5] + 2 H2O. Stearoyl-CoA desaturase that utilizes O(2) and electrons from reduced cytochrome b5 to introduce the first double bond into saturated fatty acyl-CoA substrates. Catalyzes the insertion of a cis double bond at the delta-9 position into fatty acyl-CoA substrates including palmitoyl-CoA and stearoyl-CoA. Gives rise to a mixture of 16:1 and 18:1 unsaturated fatty acids. Plays an important role in lipid biosynthesis. Plays an important role in regulating the expression of genes that are involved in lipogenesis and in regulating mitochondrial fatty acid oxidation. Plays an important role in body energy homeostasis. Contributes to the biosynthesis of membrane phospholipids, cholesterol esters and triglycerides. The chain is Stearoyl-CoA desaturase (SCD) from Sus scrofa (Pig).